The following is a 262-amino-acid chain: Inner membrane protein YcfZ (262 aa).

Topologically, residues methionine 1–phenylalanine 4 are cytoplasmic. The helical transmembrane segment at isoleucine 5–methionine 27 threads the bilayer. Residues lysine 28–asparagine 182 are Periplasmic-facing. A helical membrane pass occupies residues threonine 183–tyrosine 202. At threonine 203–phenylalanine 206 the chain is on the cytoplasmic side. The chain crosses the membrane as a helical span at residues isoleucine 207 to tyrosine 229. Topologically, residues isoleucine 230–arginine 238 are periplasmic. A helical membrane pass occupies residues isoleucine 239–leucine 258. At threonine 259–arginine 262 the chain is on the cytoplasmic side.

It localises to the cell inner membrane. This chain is Inner membrane protein YcfZ (ycfZ), found in Escherichia coli (strain K12).